The following is a 394-amino-acid chain: Subtilisin-like protease 4 (394 aa).

The signal sequence occupies residues 1-17 (CLKTLSVFLAAFAAADA). The propeptide occupies 18-116 (RAVFKTQGHK…VEQDQVVRIS (99 aa)). The Inhibitor I9 domain occupies 36–115 (YIVVMKDGVS…YVEQDQVVRI (80 aa)). N-linked (GlcNAc...) asparagine glycosylation occurs at Asn100. Residues 126 to 394 (SWGLGRVSHR…STTNRLLYNG (269 aa)) enclose the Peptidase S8 domain. Catalysis depends on charge relay system residues Asp158 and His189. N-linked (GlcNAc...) asparagine glycosylation is found at Asn250 and Asn306. Ser344 functions as the Charge relay system in the catalytic mechanism.

The protein belongs to the peptidase S8 family.

It is found in the secreted. In terms of biological role, secreted subtilisin-like serine protease with keratinolytic activity that contributes to pathogenicity. The sequence is that of Subtilisin-like protease 4 (SUB4) from Trichophyton equinum (Horse ringworm fungus).